The primary structure comprises 187 residues: MKINGNEIRPGNVIEHNGGLWVAVKTNAVKPGKGGAYNQVELKNLIDGTKLNERFRSAETVEKVRLEQKDFTFLYEQGDALVFMDSETYEQLELQKDFVGDRAAFLQDGMTVTVELYQEKPIGISLPPQVTLQVAEADPVVKGQTAASSYKPAVLENGVRILVPPFVSAGERIVVDTDEITYLRRAD.

Belongs to the elongation factor P family.

It is found in the cytoplasm. It participates in protein biosynthesis; polypeptide chain elongation. Its function is as follows. Involved in peptide bond synthesis. Stimulates efficient translation and peptide-bond synthesis on native or reconstituted 70S ribosomes in vitro. Probably functions indirectly by altering the affinity of the ribosome for aminoacyl-tRNA, thus increasing their reactivity as acceptors for peptidyl transferase. This Chelativorans sp. (strain BNC1) protein is Elongation factor P.